The following is a 140-amino-acid chain: ATP synthase epsilon chain (140 aa).

This sequence belongs to the ATPase epsilon chain family. In terms of assembly, F-type ATPases have 2 components, CF(1) - the catalytic core - and CF(0) - the membrane proton channel. CF(1) has five subunits: alpha(3), beta(3), gamma(1), delta(1), epsilon(1). CF(0) has three main subunits: a, b and c.

Its subcellular location is the cell inner membrane. Functionally, produces ATP from ADP in the presence of a proton gradient across the membrane. The protein is ATP synthase epsilon chain of Neisseria meningitidis serogroup A / serotype 4A (strain DSM 15465 / Z2491).